We begin with the raw amino-acid sequence, 384 residues long: Cytochrome b (384 aa).

A run of 4 helical transmembrane segments spans residues 32–52, 75–96, 111–131, and 176–196; these read FGSL…FLSM, FLLR…YFHI, WRVG…GYVL, and FFSL…VHLI. Heme b contacts are provided by His81 and His95. Heme b-binding residues include His180 and His194. An a ubiquinone-binding site is contributed by His199. Transmembrane regions (helical) follow at residues 224–244, 286–306, 318–338, and 345–366; these read SKDW…VYLM, FGGV…PLLH, FGRM…WIGS, and FIII…LIPL.

Belongs to the cytochrome b family. As to quaternary structure, the main subunits of complex b-c1 are: cytochrome b, cytochrome c1 and the Rieske protein. Heme b is required as a cofactor.

It localises to the mitochondrion inner membrane. In terms of biological role, component of the ubiquinol-cytochrome c reductase complex (complex III or cytochrome b-c1 complex) that is part of the mitochondrial respiratory chain. The b-c1 complex mediates electron transfer from ubiquinol to cytochrome c. Contributes to the generation of a proton gradient across the mitochondrial membrane that is then used for ATP synthesis. The sequence is that of Cytochrome b (MT-CYB) from Acropora tenuis (Purple tipped acropora).